Reading from the N-terminus, the 311-residue chain is L-lactate dehydrogenase (311 aa).

NAD(+) is bound by residues Val-12, Asp-33, Lys-38, Tyr-63, and 77-78 (GA). Residues Gln-80, Arg-86, and 118 to 121 (NPVD) each bind substrate. NAD(+) contacts are provided by residues 116–118 (VTN) and Ser-141. 146-149 (DSAR) is a substrate binding site. The beta-D-fructose 1,6-bisphosphate site is built by Arg-151 and His-166. The Proton acceptor role is filled by His-173. A Phosphotyrosine modification is found at Tyr-219. Residue Thr-228 participates in substrate binding.

Belongs to the LDH/MDH superfamily. LDH family. In terms of assembly, homotetramer.

Its subcellular location is the cytoplasm. It catalyses the reaction (S)-lactate + NAD(+) = pyruvate + NADH + H(+). Its pathway is fermentation; pyruvate fermentation to lactate; (S)-lactate from pyruvate: step 1/1. Allosterically activated by fructose 1,6-bisphosphate (FBP). Catalyzes the conversion of lactate to pyruvate. The polypeptide is L-lactate dehydrogenase (Thermoanaerobacter pseudethanolicus (strain ATCC 33223 / 39E) (Clostridium thermohydrosulfuricum)).